The chain runs to 442 residues: NADH-quinone oxidoreductase subunit D (442 aa).

The protein belongs to the complex I 49 kDa subunit family. NDH-1 is composed of 14 different subunits. Subunits NuoB, C, D, E, F, and G constitute the peripheral sector of the complex.

It is found in the cell membrane. The enzyme catalyses a quinone + NADH + 5 H(+)(in) = a quinol + NAD(+) + 4 H(+)(out). Functionally, NDH-1 shuttles electrons from NADH, via FMN and iron-sulfur (Fe-S) centers, to quinones in the respiratory chain. The immediate electron acceptor for the enzyme in this species is believed to be a menaquinone. Couples the redox reaction to proton translocation (for every two electrons transferred, four hydrogen ions are translocated across the cytoplasmic membrane), and thus conserves the redox energy in a proton gradient. This chain is NADH-quinone oxidoreductase subunit D, found in Mycolicibacterium smegmatis (strain ATCC 700084 / mc(2)155) (Mycobacterium smegmatis).